A 69-amino-acid polypeptide reads, in one-letter code: MCDASCDEEIISRRTPTFSPKLFRKSRELSPIKPVRTPTPPAPTPPPMCFSEELQRKFQEKKLLPVYDD.

Residues 22–48 (LFRKSRELSPIKPVRTPTPPAPTPPPM) are disordered. Residues 37–48 (TPTPPAPTPPPM) show a composition bias toward pro residues.

This is an uncharacterized protein from Lepidoptera (butterflies and moths).